The following is a 292-amino-acid chain: MSAGNGTPWDATWNITVQWLAVDIACRTLMFLKLMATYSAAFLPVVIGLDRQAAVLNPLGSRSGVRKLLGAAWGLSFLLAFPQLFLFHTVHCAGPVPFTQCVTKGSFKAQWQETTYNLFTFCCLFLLPLTAMAICYSRIVLSVSRPQTRKGSHAPAGEFALPRSFDNCPRVRLRALRLALLILLTFILCWTPYYLLGMWYWFSPTMLTEVPPSLSHILFLLGLLNAPLDPLLYGAFTLGCRRGHQELSIDSSKEGSGRMLQEEIHAFRQLEVQKTVTSRRAGETKGISITSI.

The Extracellular segment spans residues 1-28 (MSAGNGTPWDATWNITVQWLAVDIACRT). A disulfide bridge connects residues cysteine 26 and cysteine 101. The chain crosses the membrane as a helical span at residues 29–49 (LMFLKLMATYSAAFLPVVIGL). At 50–67 (DRQAAVLNPLGSRSGVRK) the chain is on the cytoplasmic side. A helical transmembrane segment spans residues 68-88 (LLGAAWGLSFLLAFPQLFLFH). Topologically, residues 89-115 (TVHCAGPVPFTQCVTKGSFKAQWQETT) are extracellular. The helical transmembrane segment at 116 to 136 (YNLFTFCCLFLLPLTAMAICY) threads the bilayer. The Cytoplasmic portion of the chain corresponds to 137-177 (SRIVLSVSRPQTRKGSHAPAGEFALPRSFDNCPRVRLRALR). The chain crosses the membrane as a helical span at residues 178–198 (LALLILLTFILCWTPYYLLGM). The Extracellular portion of the chain corresponds to 199–216 (WYWFSPTMLTEVPPSLSH). Residues 217-237 (ILFLLGLLNAPLDPLLYGAFT) form a helical membrane-spanning segment. Topologically, residues 238–292 (LGCRRGHQELSIDSSKEGSGRMLQEEIHAFRQLEVQKTVTSRRAGETKGISITSI) are cytoplasmic.

Belongs to the G-protein coupled receptor 1 family. Post-translationally, phosphorylated on the C-terminal cytoplasmic tail. As to expression, expressed in many tissues.

It localises to the cell membrane. Functionally, putative receptor for gonadotropin releasing hormone II (GnRH II) which is most probably non-functional. The sequence is that of Putative gonadotropin-releasing hormone II receptor (GNRHR2) from Homo sapiens (Human).